A 71-amino-acid chain; its full sequence is Small ribosomal subunit protein eS17 (71 aa).

This sequence belongs to the eukaryotic ribosomal protein eS17 family.

In Pyrobaculum arsenaticum (strain DSM 13514 / JCM 11321 / PZ6), this protein is Small ribosomal subunit protein eS17.